The sequence spans 127 residues: MRHYEIVILVHPDQSSQVPAMVERYQSMIKEKGGKVHRLEDWGRRQLAYSIDKVHKAHYLLMNIESDQGVISELENAFRYNDAVIRSLILKRDHAITQSSLIMQGAEKGKSSRKEKVDAEAEASEEA.

The disordered stretch occupies residues 102-127; sequence IMQGAEKGKSSRKEKVDAEAEASEEA. The span at 107-119 shows a compositional bias: basic and acidic residues; that stretch reads EKGKSSRKEKVDA.

This sequence belongs to the bacterial ribosomal protein bS6 family.

Binds together with bS18 to 16S ribosomal RNA. In Coxiella burnetii (strain CbuK_Q154) (Coxiella burnetii (strain Q154)), this protein is Small ribosomal subunit protein bS6.